The following is an 854-amino-acid chain: Metastasis-associated in colon cancer protein 1 (854 aa).

The residue at position 19 (Ser-19) is a Phosphoserine. Positions 212 to 349 constitute a ZU5 domain; that stretch reads VTKACKVNHQ…LSQVMYLVVA (138 aa). One can recognise an SH3 domain in the interval 549 to 619; sequence NFTNYGVTLK…HCKNVKVISK (71 aa).

Interacts with FASLG.

It is found in the cytoplasm. It localises to the nucleus. Acts as a transcription activator for MET and as a key regulator of HGF-MET signaling. This chain is Metastasis-associated in colon cancer protein 1 (MACC1), found in Pongo abelii (Sumatran orangutan).